The sequence spans 266 residues: Beta-lactamase OXA-11 (266 aa).

The N-terminal stretch at 1–20 is a signal peptide; that stretch reads MKTFAAYVIIACLSSTALAG. Residue Ser-67 is the Acyl-ester intermediate of the active site. The residue at position 70 (Lys-70) is an N6-carboxylysine. 205–207 serves as a coordination point for substrate; it reads KTG.

It belongs to the class-D beta-lactamase family.

It carries out the reaction a beta-lactam + H2O = a substituted beta-amino acid. Functionally, hydrolyzes carbenicillin, oxacillin and cephalosporin. Does not hydrolyze cefoxitin or carbapenems. This Pseudomonas aeruginosa protein is Beta-lactamase OXA-11 (bla).